Reading from the N-terminus, the 773-residue chain is Polyribonucleotide nucleotidyltransferase (773 aa).

Mg(2+)-binding residues include Asp-490 and Asp-496. The KH domain occupies 557-616 (PKIDTITIPVDKIKVVIGKGGEQIDKIIAETGVKIDIDDEGLCSIFSSDQAAIDRAKEII). One can recognise an S1 motif domain in the interval 626 to 694 (GEIYDAKVVR…DKGRVDASMR (69 aa)). Basic and acidic residues predominate over residues 700–721 (PEGYVEPERKPRERRENGDRRK). The interval 700-773 (PEGYVEPERK…FPELSTKKPE (74 aa)) is disordered. A compositionally biased stretch (low complexity) spans 739–748 (RNNQGNKVGN). The span at 751 to 773 (FELRERKSHIDEEFPELSTKKPE) shows a compositional bias: basic and acidic residues.

This sequence belongs to the polyribonucleotide nucleotidyltransferase family. Requires Mg(2+) as cofactor.

The protein resides in the cytoplasm. It catalyses the reaction RNA(n+1) + phosphate = RNA(n) + a ribonucleoside 5'-diphosphate. In terms of biological role, involved in mRNA degradation. Catalyzes the phosphorolysis of single-stranded polyribonucleotides processively in the 3'- to 5'-direction. This chain is Polyribonucleotide nucleotidyltransferase, found in Lactococcus lactis subsp. lactis (strain IL1403) (Streptococcus lactis).